We begin with the raw amino-acid sequence, 273 residues long: Phosphatidylglycerol--prolipoprotein diacylglyceryl transferase (273 aa).

A run of 4 helical transmembrane segments spans residues 18–38, 47–67, 89–109, and 116–136; these read IPVR…YVVG, LPED…IICA, IWNG…TAYI, and VSFL…QIIG. Arg-137 provides a ligand contact to a 1,2-diacyl-sn-glycero-3-phospho-(1'-sn-glycerol). 3 helical membrane-spanning segments follow: residues 178-198, 207-227, and 238-258; these read VHPT…ILLI, GEIF…IEGM, and LRSA…AIIY.

Belongs to the Lgt family.

The protein resides in the cell membrane. It carries out the reaction L-cysteinyl-[prolipoprotein] + a 1,2-diacyl-sn-glycero-3-phospho-(1'-sn-glycerol) = an S-1,2-diacyl-sn-glyceryl-L-cysteinyl-[prolipoprotein] + sn-glycerol 1-phosphate + H(+). The protein operates within protein modification; lipoprotein biosynthesis (diacylglyceryl transfer). Its function is as follows. Catalyzes the transfer of the diacylglyceryl group from phosphatidylglycerol to the sulfhydryl group of the N-terminal cysteine of a prolipoprotein, the first step in the formation of mature lipoproteins. The sequence is that of Phosphatidylglycerol--prolipoprotein diacylglyceryl transferase from Lysinibacillus sphaericus (strain C3-41).